The following is a 410-amino-acid chain: Histidine--tRNA ligase (410 aa).

It belongs to the class-II aminoacyl-tRNA synthetase family. Homodimer.

The protein resides in the cytoplasm. It carries out the reaction tRNA(His) + L-histidine + ATP = L-histidyl-tRNA(His) + AMP + diphosphate + H(+). This Elusimicrobium minutum (strain Pei191) protein is Histidine--tRNA ligase.